Here is a 221-residue protein sequence, read N- to C-terminus: Deoxyribose-phosphate aldolase (221 aa).

Residue Asp-89 is the Proton donor/acceptor of the active site. The active-site Schiff-base intermediate with acetaldehyde is Lys-151. Lys-180 (proton donor/acceptor) is an active-site residue.

Belongs to the DeoC/FbaB aldolase family. DeoC type 1 subfamily.

Its subcellular location is the cytoplasm. It carries out the reaction 2-deoxy-D-ribose 5-phosphate = D-glyceraldehyde 3-phosphate + acetaldehyde. It participates in carbohydrate degradation; 2-deoxy-D-ribose 1-phosphate degradation; D-glyceraldehyde 3-phosphate and acetaldehyde from 2-deoxy-alpha-D-ribose 1-phosphate: step 2/2. Catalyzes a reversible aldol reaction between acetaldehyde and D-glyceraldehyde 3-phosphate to generate 2-deoxy-D-ribose 5-phosphate. The chain is Deoxyribose-phosphate aldolase from Mesomycoplasma hyopneumoniae (strain 232) (Mycoplasma hyopneumoniae).